We begin with the raw amino-acid sequence, 119 residues long: MSRVKRGVTAHAKHKKVFKAAKGYYGRRKNTIRTAKQAVEKAGQYAFRDRKRKKRTFRALWIQRLNAAVRPFELTYSRFIDGLSKSGITVDRKVLSDLAINEPAAFQAIVEKAKAALAA.

The protein belongs to the bacterial ribosomal protein bL20 family.

Binds directly to 23S ribosomal RNA and is necessary for the in vitro assembly process of the 50S ribosomal subunit. It is not involved in the protein synthesizing functions of that subunit. The protein is Large ribosomal subunit protein bL20 of Bradyrhizobium sp. (strain BTAi1 / ATCC BAA-1182).